The chain runs to 302 residues: Syntaxin-17 (302 aa).

S2 carries the N-acetylserine modification. Residues S2–K228 are Cytoplasmic-facing. K41 bears the N6-acetyllysine mark. The stretch at E53–E123 forms a coiled coil. The residue at position 157 (Y157) is a Phosphotyrosine; by ABL1. A t-SNARE coiled-coil homology domain is found at I162 to A224. Residues L229–L249 form a helical membrane-spanning segment. Residues L229 to I275 are necessary and sufficient for localization to autophagosome. The Lumenal segment spans residues L250–K254. The helical transmembrane segment at V255 to I275 threads the bilayer. Topologically, residues Q276–S302 are cytoplasmic. S289 is subject to Phosphoserine. An Endoplasmic reticulum retention signal motif is present at residues K299 to S302.

This sequence belongs to the syntaxin family. As to quaternary structure, forms a SNARE complex composed of VAMP8, SNAP29 and STX17 involved in fusion of autophagosome with lysosome. May interact with VTI1B. Probably interacts with BET1, SCFD1 and SEC22B. Interacts with PTPN2 and ABL1; involved in STX17 phosphorylation. Interacts with COPB1. Interacts with TMED9 and TMED10; the interaction is direct. Interacts with VAMP7. Interacts with RUBCNL/PACER; promoting targeting of RUBCNL/PACER to autophagosome. Interacts with VAMP8, SNAP29, VPS39 and VPS41; these interactions are increased in the absence of TMEM39A. Interacts with IRGM; promoting STX17 recruitment to autophagosomes. Interacts with ATG8 proteins GABARAP and MAP1LC3B. Interacts with RNF115; this interaction enhances STX17 stability which in turn promotes autophagosome maturation. Interacts with RAB39A (GTP-bound); the interaction promotes autophagosome-lysosome membrane fusion driven by STX17-SNAP29-VAMP8. Interacts with RAB39B; the interaction may promote a different fonction in autophagy as compared with RAB39A. Post-translationally, phosphorylated at Tyr-157 probably by ABL1. Dephosphorylation by PTPN2; regulates exit from the endoplasmic reticulum.

It is found in the endoplasmic reticulum membrane. It localises to the smooth endoplasmic reticulum membrane. The protein resides in the endoplasmic reticulum-Golgi intermediate compartment membrane. The protein localises to the cytoplasmic vesicle. Its subcellular location is the autophagosome membrane. It is found in the COPII-coated vesicle membrane. It localises to the cytoplasm. The protein resides in the cytosol. The protein localises to the mitochondrion membrane. Its subcellular location is the autolysosome membrane. In terms of biological role, SNAREs, soluble N-ethylmaleimide-sensitive factor-attachment protein receptors, are essential proteins for fusion of cellular membranes. SNAREs localized on opposing membranes assemble to form a trans-SNARE complex, an extended, parallel four alpha-helical bundle that drives membrane fusion. STX17 is a SNARE of the autophagosome involved in autophagy through the direct control of autophagosome membrane fusion with the lysosome membrane. May also play a role in the early secretory pathway where it may maintain the architecture of the endoplasmic reticulum-Golgi intermediate compartment/ERGIC and Golgi and/or regulate transport between the endoplasmic reticulum, the ERGIC and the Golgi. The chain is Syntaxin-17 from Bos taurus (Bovine).